A 319-amino-acid chain; its full sequence is Probable cytochrome c oxidase subunit 2 (319 aa).

Residues 1 to 33 form the signal peptide; sequence MSPNGSDRSPRRPMRRKLLQALTAGLVLATATG. 2 consecutive transmembrane segments (helical) span residues 63 to 83 and 101 to 121; these read WAAA…ATIF and MPIE…LFYF. The Cu cation site is built by H227, C262, C266, and H270.

Belongs to the cytochrome c oxidase subunit 2 family. Cu cation is required as a cofactor. Heme serves as cofactor.

It localises to the cell membrane. It catalyses the reaction 4 Fe(II)-[cytochrome c] + O2 + 8 H(+)(in) = 4 Fe(III)-[cytochrome c] + 2 H2O + 4 H(+)(out). Functionally, subunits I and II form the functional core of the enzyme complex. Electrons originating in cytochrome c are transferred via heme a and Cu(A) to the binuclear center formed by heme a3 and Cu(B). The polypeptide is Probable cytochrome c oxidase subunit 2 (ctaC) (Streptomyces avermitilis (strain ATCC 31267 / DSM 46492 / JCM 5070 / NBRC 14893 / NCIMB 12804 / NRRL 8165 / MA-4680)).